The primary structure comprises 294 residues: 4-hydroxy-tetrahydrodipicolinate synthase (294 aa).

T47 contacts pyruvate. Y135 (proton donor/acceptor) is an active-site residue. K163 (schiff-base intermediate with substrate) is an active-site residue. Pyruvate is bound at residue T205.

The protein belongs to the DapA family. Homotetramer; dimer of dimers.

It localises to the cytoplasm. It catalyses the reaction L-aspartate 4-semialdehyde + pyruvate = (2S,4S)-4-hydroxy-2,3,4,5-tetrahydrodipicolinate + H2O + H(+). It functions in the pathway amino-acid biosynthesis; L-lysine biosynthesis via DAP pathway; (S)-tetrahydrodipicolinate from L-aspartate: step 3/4. In terms of biological role, catalyzes the condensation of (S)-aspartate-beta-semialdehyde [(S)-ASA] and pyruvate to 4-hydroxy-tetrahydrodipicolinate (HTPA). The sequence is that of 4-hydroxy-tetrahydrodipicolinate synthase from Rickettsia rickettsii.